The chain runs to 133 residues: MKVDLDWVHHKLQEVVNHAYTPFSKFKVACMLVANNQAFYGVNIENASYPVTLCAERSAIANMVTSIGKATIDYVFVYFDTKTPTNSPCGMCRQNIFEFATDKTQLFCIEKDKSFKQFTIPEILKGGFRSYEQ.

One can recognise a CMP/dCMP-type deaminase domain in the interval 3–131; the sequence is VDLDWVHHKL…EILKGGFRSY (129 aa). 43–45 is a substrate binding site; sequence NIE. Zn(2+) is bound at residue Cys-54. Glu-56 acts as the Proton donor in catalysis. Positions 89 and 92 each coordinate Zn(2+).

Belongs to the cytidine and deoxycytidylate deaminase family. As to quaternary structure, homodimer. It depends on Zn(2+) as a cofactor.

The enzyme catalyses cytidine + H2O + H(+) = uridine + NH4(+). It catalyses the reaction 2'-deoxycytidine + H2O + H(+) = 2'-deoxyuridine + NH4(+). In terms of biological role, this enzyme scavenges exogenous and endogenous cytidine and 2'-deoxycytidine for UMP synthesis. The polypeptide is Cytidine deaminase (cdd) (Mycoplasma pneumoniae (strain ATCC 29342 / M129 / Subtype 1) (Mycoplasmoides pneumoniae)).